The primary structure comprises 374 residues: Carbamoyl phosphate synthase small chain (374 aa).

Residues 1–183 (MVLADGQMIW…QNGYSVVDNQ (183 aa)) form a CPSase region. Residues serine 41, glycine 235, and glycine 237 each coordinate L-glutamine. Residues 187–374 (HVVAIDYGLK…FIDLIAKERP (188 aa)) form the Glutamine amidotransferase type-1 domain. Cysteine 264 serves as the catalytic Nucleophile. L-glutamine-binding residues include leucine 265, glutamine 268, asparagine 306, glycine 308, and phenylalanine 309. Residues histidine 348 and glutamate 350 contribute to the active site.

It belongs to the CarA family. Composed of two chains; the small (or glutamine) chain promotes the hydrolysis of glutamine to ammonia, which is used by the large (or ammonia) chain to synthesize carbamoyl phosphate. Tetramer of heterodimers (alpha,beta)4.

It carries out the reaction hydrogencarbonate + L-glutamine + 2 ATP + H2O = carbamoyl phosphate + L-glutamate + 2 ADP + phosphate + 2 H(+). The catalysed reaction is L-glutamine + H2O = L-glutamate + NH4(+). The protein operates within amino-acid biosynthesis; L-arginine biosynthesis; carbamoyl phosphate from bicarbonate: step 1/1. It functions in the pathway pyrimidine metabolism; UMP biosynthesis via de novo pathway; (S)-dihydroorotate from bicarbonate: step 1/3. In terms of biological role, small subunit of the glutamine-dependent carbamoyl phosphate synthetase (CPSase). CPSase catalyzes the formation of carbamoyl phosphate from the ammonia moiety of glutamine, carbonate, and phosphate donated by ATP, constituting the first step of 2 biosynthetic pathways, one leading to arginine and/or urea and the other to pyrimidine nucleotides. The small subunit (glutamine amidotransferase) binds and cleaves glutamine to supply the large subunit with the substrate ammonia. This Zymomonas mobilis subsp. mobilis (strain ATCC 31821 / ZM4 / CP4) protein is Carbamoyl phosphate synthase small chain.